A 557-amino-acid chain; its full sequence is Formate--tetrahydrofolate ligase 2 (557 aa).

66-73 contributes to the ATP binding site; sequence TPAGEGKT.

The protein belongs to the formate--tetrahydrofolate ligase family.

The enzyme catalyses (6S)-5,6,7,8-tetrahydrofolate + formate + ATP = (6R)-10-formyltetrahydrofolate + ADP + phosphate. It participates in one-carbon metabolism; tetrahydrofolate interconversion. This Streptococcus pyogenes serotype M3 (strain ATCC BAA-595 / MGAS315) protein is Formate--tetrahydrofolate ligase 2.